Reading from the N-terminus, the 281-residue chain is Nucleotide-binding protein PSHAa2554 (281 aa).

8–15 (GRSGSGKS) lines the ATP pocket. 56–59 (DVRN) serves as a coordination point for GTP.

This sequence belongs to the RapZ-like family.

In terms of biological role, displays ATPase and GTPase activities. This Pseudoalteromonas translucida (strain TAC 125) protein is Nucleotide-binding protein PSHAa2554.